The following is a 542-amino-acid chain: Probable myosin-binding protein 6 (542 aa).

A signal peptide spans 1–21 (MYIQLLCFFLFLFLLLQATMS). The chain crosses the membrane as a helical span at residues 39 to 59 (FLIYTVLEWSLIVFLFIDGVI). The interval 219–239 (SFLAPAPSPRVSHNKLSENES) is disordered. Positions 300 to 398 (SILNQLKKEV…ELEAEFEVYR (99 aa)) constitute a GTD-binding domain. The interval 419–480 (GNASAYDDCQ…DEEKGSESKE (62 aa)) is disordered. The segment covering 437-456 (AVSSSNQQENGENIDQNGQS) has biased composition (polar residues). Basic and acidic residues predominate over residues 471-480 (DEEKGSESKE).

It localises to the membrane. Probable membrane-anchored myosin receptors. In Arabidopsis thaliana (Mouse-ear cress), this protein is Probable myosin-binding protein 6.